We begin with the raw amino-acid sequence, 750 residues long: Photosystem I P700 chlorophyll a apoprotein A1 (750 aa).

Helical transmembrane passes span 70 to 93 (IFSAHFGQLSIIFLWLSGMYFHGA), 156 to 179 (LYCTAIGGLVFAALMLFAGWFHYH), 195 to 219 (LNHHLAGLLGLGSLSWAGHQVHVSL), 291 to 309 (IAHHHLAIAILFLIAGHMY), 346 to 369 (WHAQLSINLAMLGSLTIIVAHHMY), 385 to 411 (LSLFTHHMWIGGFLIVGAAAHAAIFMV), 433 to 455 (AIISHLNWVCIFLGFHSFGLYIH), and 531 to 549 (FLVHHIHAFTIHVTVLILL). Residues C573 and C582 each contribute to the [4Fe-4S] cluster site. Transmembrane regions (helical) follow at residues 589-610 (HVFLGLFWMYNAISVVIFHFSW) and 664-686 (LSAYGLFFLGAHFVWAFSLMFLF). H675 is a binding site for chlorophyll a'. Positions 683 and 691 each coordinate chlorophyll a. Residue W692 participates in phylloquinone binding. A helical transmembrane segment spans residues 724–744 (AVGVTHYLLGGIATTWAFFLA).

The protein belongs to the PsaA/PsaB family. In terms of assembly, the PsaA/B heterodimer binds the P700 chlorophyll special pair and subsequent electron acceptors. PSI consists of a core antenna complex that captures photons, and an electron transfer chain that converts photonic excitation into a charge separation. The eukaryotic PSI reaction center is composed of at least 11 subunits. P700 is a chlorophyll a/chlorophyll a' dimer, A0 is one or more chlorophyll a, A1 is one or both phylloquinones and FX is a shared 4Fe-4S iron-sulfur center. is required as a cofactor.

The protein localises to the plastid. Its subcellular location is the chloroplast thylakoid membrane. It carries out the reaction reduced [plastocyanin] + hnu + oxidized [2Fe-2S]-[ferredoxin] = oxidized [plastocyanin] + reduced [2Fe-2S]-[ferredoxin]. Its function is as follows. PsaA and PsaB bind P700, the primary electron donor of photosystem I (PSI), as well as the electron acceptors A0, A1 and FX. PSI is a plastocyanin-ferredoxin oxidoreductase, converting photonic excitation into a charge separation, which transfers an electron from the donor P700 chlorophyll pair to the spectroscopically characterized acceptors A0, A1, FX, FA and FB in turn. Oxidized P700 is reduced on the lumenal side of the thylakoid membrane by plastocyanin. The chain is Photosystem I P700 chlorophyll a apoprotein A1 from Lotus japonicus (Lotus corniculatus var. japonicus).